The following is a 338-amino-acid chain: Probable dual-specificity RNA methyltransferase RlmN (338 aa).

Glu89 (proton acceptor) is an active-site residue. The region spanning His95 to Asp325 is the Radical SAM core domain. Cysteines 102 and 330 form a disulfide. Positions 109, 113, and 116 each coordinate [4Fe-4S] cluster. S-adenosyl-L-methionine-binding positions include Gly156 to Glu157, Ser188, Ser211 to His213, and Asn287. The active-site S-methylcysteine intermediate is the Cys330.

The protein belongs to the radical SAM superfamily. RlmN family. [4Fe-4S] cluster serves as cofactor.

The protein localises to the cytoplasm. The catalysed reaction is adenosine(2503) in 23S rRNA + 2 reduced [2Fe-2S]-[ferredoxin] + 2 S-adenosyl-L-methionine = 2-methyladenosine(2503) in 23S rRNA + 5'-deoxyadenosine + L-methionine + 2 oxidized [2Fe-2S]-[ferredoxin] + S-adenosyl-L-homocysteine. It carries out the reaction adenosine(37) in tRNA + 2 reduced [2Fe-2S]-[ferredoxin] + 2 S-adenosyl-L-methionine = 2-methyladenosine(37) in tRNA + 5'-deoxyadenosine + L-methionine + 2 oxidized [2Fe-2S]-[ferredoxin] + S-adenosyl-L-homocysteine. Functionally, specifically methylates position 2 of adenine 2503 in 23S rRNA and position 2 of adenine 37 in tRNAs. This Acholeplasma laidlawii (strain PG-8A) protein is Probable dual-specificity RNA methyltransferase RlmN.